A 512-amino-acid chain; its full sequence is Glutathione-binding protein GsiB (512 aa).

Positions 1–26 (MTQFITHKWLAALGLASSIAAFPALA) are cleaved as a signal peptide.

Belongs to the bacterial solute-binding protein 5 family. As to quaternary structure, the complex is composed of two ATP-binding proteins (GsiA), two transmembrane proteins (GsiC and GsiD) and a solute-binding protein (GsiB).

It localises to the periplasm. Part of the ABC transporter complex GsiABCD involved in glutathione import. Binds glutathione. The chain is Glutathione-binding protein GsiB from Salmonella paratyphi A (strain ATCC 9150 / SARB42).